The sequence spans 691 residues: Solute carrier organic anion transporter family member 1B1 (691 aa).

Residues 1–28 (MDQNQHLNKTAEAQPSENKKTRYCNGLK) are Cytoplasmic-facing. The helical transmembrane segment at 29–48 (MFLAALSLSFIAKTLGAIIM) threads the bilayer. The Extracellular portion of the chain corresponds to 49–67 (KSSIIHIERRFEISSSLVG). Residues 68 to 88 (FIDGSFEIGNLLVIVFVSYFG) traverse the membrane as a helical segment. Residues 89–94 (SKLHRP) are Cytoplasmic-facing. Residues 95–119 (KLIGIGCFIMGIGGVLTALPHFFMG) form a helical membrane-spanning segment. The Extracellular portion of the chain corresponds to 120–168 (YYRYSKETNINSSENSTSTLSTCLINQILSLNRASPEIVGKGCLKESGS). Asn-130 and Asn-134 each carry an N-linked (GlcNAc...) asparagine glycan. Residues 169–197 (YMWIYVFMGNMLRGIGETPIVPLGLSYID) traverse the membrane as a helical segment. The Cytoplasmic portion of the chain corresponds to 198-216 (DFAKEGHSSLYLGILNAIA). A helical transmembrane segment spans residues 217 to 237 (MIGPIIGFTLGSLFSKMYVDI). The Extracellular segment spans residues 238 to 255 (GYVDLSTIRITPTDSRWV). The chain crosses the membrane as a helical span at residues 256–280 (GAWWLNFLVSGLFSIISSIPFFFLP). The Cytoplasmic segment spans residues 281–331 (QTPNKPQKERKASLSLHVLETNDEKDQTANLTNQGKNITKNVTGFFQSFKS). Residues Ser-293 and Ser-295 each carry the phosphoserine modification. A helical membrane pass occupies residues 332-353 (ILTNPLYVMFVLLTLLQVSSYI). The Extracellular portion of the chain corresponds to 354–373 (GAFTYVFKYVEQQYGQPSSK). Residues 374 to 397 (ANILLGVITIPIFASGMFLGGYII) form a helical membrane-spanning segment. Residues 398–401 (KKFK) are Cytoplasmic-facing. Residues 402 to 425 (LNTVGIAKFSCFTAVMSLSFYLLY) traverse the membrane as a helical segment. At 426–537 (FFILCENKSV…DACTRKFYFF (112 aa)) the chain is on the extracellular side. Residue Asn-432 is glycosylated (N-linked (GlcNAc...) asparagine). A Kazal-like domain is found at 453-508 (DVPLSYCNSDCNCDESQWEPVCGNNGITYISPCLAGCKSSSGNKKPIVFYNCSCLE). Cystine bridges form between Cys-459–Cys-489, Cys-465–Cys-485, and Cys-474–Cys-506. Asn-503 and Asn-516 each carry an N-linked (GlcNAc...) asparagine glycan. A helical transmembrane segment spans residues 538–560 (VAIQVLNLFFSALGGTSHVMLIV). Residues 561–569 (KIVQPELKS) lie on the Cytoplasmic side of the membrane. A helical membrane pass occupies residues 570 to 595 (LALGFHSMVIRALGGILAPIYFGALI). The Extracellular segment spans residues 596–629 (DTTCIKWSTNNCGTRGSCRTYNSTSFSRVYLGLS). Asn-617 carries N-linked (GlcNAc...) asparagine glycosylation. The helical transmembrane segment at 630–647 (SMLRVSSLVLYIILIYAM) threads the bilayer. The Cytoplasmic portion of the chain corresponds to 648–691 (KKKYQEKDINASENGSVMDEANLESLNKNKHFVPSAGADSETHC). Phosphoserine occurs at positions 672 and 682.

Belongs to the organo anion transporter (TC 2.A.60) family. Highly expressed in liver, at the basolateral membranes of centrilobular hepatocytes. Expressed in liver (at protein level). Expressed in fetal liver. Not detected in heart, brain, placenta, lung, skeletal muscle, kidney, pancreas, spleen, thymus, prostate, testis, ovary, small intestine, colon and leukocyte. In testis, primarily localized to the basal membrane of Sertoli cells and weakly expressed in Leydig cells and within the tubules.

The protein localises to the basolateral cell membrane. Its subcellular location is the basal cell membrane. The catalysed reaction is taurocholate(out) = taurocholate(in). It carries out the reaction dehydroepiandrosterone 3-sulfate(out) = dehydroepiandrosterone 3-sulfate(in). The enzyme catalyses estrone 3-sulfate(out) = estrone 3-sulfate(in). It catalyses the reaction 3,3',5'-triiodo-L-thyronine(out) = 3,3',5'-triiodo-L-thyronine(in). The catalysed reaction is L-thyroxine(out) = L-thyroxine(in). It carries out the reaction prostaglandin E2(out) = prostaglandin E2(in). The enzyme catalyses thromboxane B2(out) = thromboxane B2(in). It catalyses the reaction 17beta-estradiol 17-O-(beta-D-glucuronate)(out) = 17beta-estradiol 17-O-(beta-D-glucuronate)(in). The catalysed reaction is leukotriene C4(out) = leukotriene C4(in). It carries out the reaction leukotriene E4(out) = leukotriene E4(in). The enzyme catalyses (4E,15E)-bilirubin IXalpha C8-beta-D-glucuronoside(out) = (4E,15E)-bilirubin IXalpha C8-beta-D-glucuronoside(in). It catalyses the reaction bilirubin IXalpha bis-beta-D-glucuronoside(out) = bilirubin IXalpha bis-beta-D-glucuronoside(in). In terms of biological role, mediates the Na(+)-independent uptake of organic anions. Shows broad substrate specificity, can transport both organic anions such as bile acid taurocholate (cholyltaurine) and conjugated steroids (dehydroepiandrosterone 3-sulfate, 17-beta-glucuronosyl estradiol, and estrone 3-sulfate), as well as eicosanoids (prostaglandin E2, thromboxane B2, leukotriene C4, and leukotriene E4), and thyroid hormones (T4/L-thyroxine, and T3/3,3',5'-triiodo-L-thyronine). Can take up bilirubin glucuronides from plasma into the liver, contributing to the detoxification-enhancing liver-blood shuttling loop. Involved in the clearance of endogenous and exogenous substrates from the liver. Transports coproporphyrin I and III, by-products of heme synthesis, and may be involved in their hepatic disposition. May contribute to regulate the transport of organic compounds in testes across the blood-testis-barrier. Can transport HMG-CoA reductase inhibitors (also known as statins), such as pravastatin and pitavastatin, a clinically important class of hypolipidemic drugs. May play an important role in plasma and tissue distribution of the structurally diverse chemotherapeutic drug methotrexate. May also transport antihypertension agents, such as the angiotensin-converting enzyme (ACE) inhibitor prodrug enalapril, and the highly selective angiotensin II AT1-receptor antagonist valsartan, in the liver. Shows a pH-sensitive substrate specificity towards prostaglandin E2 and T4 which may be ascribed to the protonation state of the binding site and leads to a stimulation of substrate transport in an acidic microenvironment. Hydrogencarbonate/HCO3(-) acts as the probable counteranion that exchanges for organic anions. The polypeptide is Solute carrier organic anion transporter family member 1B1 (SLCO1B1) (Homo sapiens (Human)).